Consider the following 188-residue polypeptide: Peptidyl-tRNA hydrolase (188 aa).

Tyr-15 contacts tRNA. The active-site Proton acceptor is His-20. Residues Phe-66, Asn-68, and Asn-114 each contribute to the tRNA site.

This sequence belongs to the PTH family. Monomer.

It is found in the cytoplasm. It carries out the reaction an N-acyl-L-alpha-aminoacyl-tRNA + H2O = an N-acyl-L-amino acid + a tRNA + H(+). Hydrolyzes ribosome-free peptidyl-tRNAs (with 1 or more amino acids incorporated), which drop off the ribosome during protein synthesis, or as a result of ribosome stalling. Functionally, catalyzes the release of premature peptidyl moieties from peptidyl-tRNA molecules trapped in stalled 50S ribosomal subunits, and thus maintains levels of free tRNAs and 50S ribosomes. The polypeptide is Peptidyl-tRNA hydrolase (Lactococcus lactis subsp. lactis (strain IL1403) (Streptococcus lactis)).